Consider the following 151-residue polypeptide: ALK and LTK ligand 2 (151 aa).

An N-terminal signal peptide occupies residues 1 to 25; the sequence is MRVSGRPMLLALLLLLSTVGDPGHA. 2 disulfides stabilise this stretch: cysteine 112–cysteine 148 and cysteine 126–cysteine 135.

Belongs to the ALKAL family. As to quaternary structure, homodimer.

It localises to the secreted. The protein localises to the cell membrane. Cytokine that acts as a physiological ligand for receptor tyrosine kinases LTK and ALK, leading to their activation. Cytokine-binding is sufficient to activate LTK. In contrast, ALKAL2-driven activation of ALK is coupled with heparin-binding to ALK. Stimulation of ALK signaling is involved in neural development and regulation of energy expenditure. The polypeptide is ALK and LTK ligand 2 (Rattus norvegicus (Rat)).